Reading from the N-terminus, the 77-residue chain is Acyl carrier protein (77 aa).

Residues 1–76 (MENFDKVKDI…DAVNFINNLE (76 aa)) form the Carrier domain. S36 is subject to O-(pantetheine 4'-phosphoryl)serine.

This sequence belongs to the acyl carrier protein (ACP) family. In terms of processing, 4'-phosphopantetheine is transferred from CoA to a specific serine of apo-ACP by AcpS. This modification is essential for activity because fatty acids are bound in thioester linkage to the sulfhydryl of the prosthetic group.

The protein localises to the cytoplasm. It participates in lipid metabolism; fatty acid biosynthesis. Its function is as follows. Carrier of the growing fatty acid chain in fatty acid biosynthesis. The polypeptide is Acyl carrier protein (Staphylococcus carnosus (strain TM300)).